The chain runs to 833 residues: Glycerol-3-phosphate acyltransferase (833 aa).

The HXXXXD motif motif lies at 309–314 (CHRSHI).

It belongs to the GPAT/DAPAT family.

It is found in the cell inner membrane. It catalyses the reaction sn-glycerol 3-phosphate + an acyl-CoA = a 1-acyl-sn-glycero-3-phosphate + CoA. It functions in the pathway phospholipid metabolism; CDP-diacylglycerol biosynthesis; CDP-diacylglycerol from sn-glycerol 3-phosphate: step 1/3. This Pseudomonas syringae pv. syringae (strain B728a) protein is Glycerol-3-phosphate acyltransferase.